Consider the following 190-residue polypeptide: Xanthine phosphoribosyltransferase 2 (190 aa).

Xanthine contacts are provided by leucine 20 and asparagine 27. 129–133 (ANGCA) contributes to the 5-phospho-alpha-D-ribose 1-diphosphate binding site. Position 157 (lysine 157) interacts with xanthine.

This sequence belongs to the purine/pyrimidine phosphoribosyltransferase family. Xpt subfamily. In terms of assembly, homodimer.

The protein localises to the cytoplasm. It catalyses the reaction XMP + diphosphate = xanthine + 5-phospho-alpha-D-ribose 1-diphosphate. It functions in the pathway purine metabolism; XMP biosynthesis via salvage pathway; XMP from xanthine: step 1/1. In terms of biological role, converts the preformed base xanthine, a product of nucleic acid breakdown, to xanthosine 5'-monophosphate (XMP), so it can be reused for RNA or DNA synthesis. This is Xanthine phosphoribosyltransferase 2 from Clostridium botulinum (strain Langeland / NCTC 10281 / Type F).